The primary structure comprises 63 residues: Large ribosomal subunit protein uL29 (63 aa).

This sequence belongs to the universal ribosomal protein uL29 family.

This Sodalis glossinidius (strain morsitans) protein is Large ribosomal subunit protein uL29.